A 153-amino-acid chain; its full sequence is General odorant-binding protein lush (153 aa).

The N-terminal stretch at 1–29 is a signal peptide; the sequence is MKHWKRRSSAVFAIVLQVLVLLLPDPAVA. 3 cysteine pairs are disulfide-bonded: Cys-46/Cys-79, Cys-75/Cys-132, and Cys-121/Cys-141. Ser-81 and Thr-86 together coordinate 1-propanol. The butan-1-ol site is built by Ser-81 and Thr-86. Residues Ser-81 and Thr-86 each contribute to the ethanol site.

This sequence belongs to the PBP/GOBP family. As to expression, specifically expressed in chemosensory system in both males and females. Expressed in a subset of trichoid chemosensory sensilla located on the ventral-lateral surface of the third antennal segment. Secreted from non-neuronal support cells into the sensillum lymph that bathes the olfactory neurons within these sensilla.

The protein resides in the secreted. Its function is as follows. Odorant-binding protein required for olfactory behavior and for activity of pheromone-sensitive neurons. Binds to alcohols and mediates avoidance behavior to high concentrations of alcohols, the alcohol-binding possibly resulting in activation of receptors on T2B neurons, the activation of these receptors inhibiting these neurons. Acts in concert with Snmp and lush to capture cVA molecules on the surface of Or67d expressing olfactory dendrites and facilitate their transfer to the odorant-receptor Orco complex. Required for cVA response, probably by binding to VA. May act by serving as an adapter that bridges the presence of gaseous pheromone molecules, cVA, to activation of specific neuronal receptors expressed on T1 olfactory neurons, possibly via a specific conformational change induced by cVA that in turn activates T1 receptors. T1 neurons are excited by the pheromone VA, while T2 neurons are inhibited by alcohols. Also binds to phthalates. This Drosophila melanogaster (Fruit fly) protein is General odorant-binding protein lush (lush).